We begin with the raw amino-acid sequence, 79 residues long: Small ribosomal subunit protein uS17 (79 aa).

The protein belongs to the universal ribosomal protein uS17 family. Part of the 30S ribosomal subunit.

Its function is as follows. One of the primary rRNA binding proteins, it binds specifically to the 5'-end of 16S ribosomal RNA. The protein is Small ribosomal subunit protein uS17 of Roseobacter denitrificans (strain ATCC 33942 / OCh 114) (Erythrobacter sp. (strain OCh 114)).